A 796-amino-acid polypeptide reads, in one-letter code: Ent-copalyl diphosphate synthase 4 (796 aa).

A chloroplast-targeting transit peptide spans 1 to 23; that stretch reads MSSSSIVTSLLRPTTAADGVLPR. Position 240 (K240) interacts with substrate. The Mg(2+) site is built by D371 and D373. The DXDD motif motif lies at 371–374; that stretch reads DVDD. Position 457 (K457) interacts with substrate.

Belongs to the terpene synthase family. Tpsc subfamily. It depends on Mg(2+) as a cofactor. Highly expressed in leaves, and, at low levels, in stems, but barely in roots and flowers.

The protein localises to the plastid. Its subcellular location is the chloroplast. It carries out the reaction (2E,6E,10E)-geranylgeranyl diphosphate = ent-copalyl diphosphate. Its pathway is secondary metabolite biosynthesis; terpenoid biosynthesis. Functionally, involved in the biosynthesis of ent-kaurene diterpenoids natural products such as oridonin, miltiradiene, eriocalyxin B and nezukol, known to exhibit antitumor, anti-inflammatory and antibacterial activities. Catalyzes the conversion of (2E,6E,10E)-geranylgeranyl diphosphate (GGPP) to ent-copalyl diphosphate (ent-CPP). The protein is Ent-copalyl diphosphate synthase 4 of Isodon rubescens (Rabdosia rubescens).